The sequence spans 234 residues: Biosynthetic peptidoglycan transglycosylase (234 aa).

The helical transmembrane segment at 8–28 threads the bilayer; it reads VIGCFAAGVVALNLYFFAAIA.

The protein belongs to the glycosyltransferase 51 family.

It localises to the cell inner membrane. The enzyme catalyses [GlcNAc-(1-&gt;4)-Mur2Ac(oyl-L-Ala-gamma-D-Glu-L-Lys-D-Ala-D-Ala)](n)-di-trans,octa-cis-undecaprenyl diphosphate + beta-D-GlcNAc-(1-&gt;4)-Mur2Ac(oyl-L-Ala-gamma-D-Glu-L-Lys-D-Ala-D-Ala)-di-trans,octa-cis-undecaprenyl diphosphate = [GlcNAc-(1-&gt;4)-Mur2Ac(oyl-L-Ala-gamma-D-Glu-L-Lys-D-Ala-D-Ala)](n+1)-di-trans,octa-cis-undecaprenyl diphosphate + di-trans,octa-cis-undecaprenyl diphosphate + H(+). Its pathway is cell wall biogenesis; peptidoglycan biosynthesis. Peptidoglycan polymerase that catalyzes glycan chain elongation from lipid-linked precursors. This chain is Biosynthetic peptidoglycan transglycosylase, found in Ralstonia nicotianae (strain ATCC BAA-1114 / GMI1000) (Ralstonia solanacearum).